The chain runs to 369 residues: UDP-N-acetylglucosamine--N-acetylmuramyl-(pentapeptide) pyrophosphoryl-undecaprenol N-acetylglucosamine transferase (369 aa).

UDP-N-acetyl-alpha-D-glucosamine contacts are provided by residues 10 to 12 (TGG), asparagine 124, arginine 166, serine 196, and glutamine 300.

It belongs to the glycosyltransferase 28 family. MurG subfamily.

The protein localises to the cell membrane. It carries out the reaction di-trans,octa-cis-undecaprenyl diphospho-N-acetyl-alpha-D-muramoyl-L-alanyl-D-glutamyl-meso-2,6-diaminopimeloyl-D-alanyl-D-alanine + UDP-N-acetyl-alpha-D-glucosamine = di-trans,octa-cis-undecaprenyl diphospho-[N-acetyl-alpha-D-glucosaminyl-(1-&gt;4)]-N-acetyl-alpha-D-muramoyl-L-alanyl-D-glutamyl-meso-2,6-diaminopimeloyl-D-alanyl-D-alanine + UDP + H(+). The protein operates within cell wall biogenesis; peptidoglycan biosynthesis. In terms of biological role, cell wall formation. Catalyzes the transfer of a GlcNAc subunit on undecaprenyl-pyrophosphoryl-MurNAc-pentapeptide (lipid intermediate I) to form undecaprenyl-pyrophosphoryl-MurNAc-(pentapeptide)GlcNAc (lipid intermediate II). The chain is UDP-N-acetylglucosamine--N-acetylmuramyl-(pentapeptide) pyrophosphoryl-undecaprenol N-acetylglucosamine transferase from Desulfitobacterium hafniense (strain DSM 10664 / DCB-2).